The primary structure comprises 800 residues: MSLAYSQATSLLLSSTTRGGVPSLMHIPATNSPARINTGATPFWKLPFPARPLRQYKSITRARNQVILTAEKSVDVDTEKNTHHQKATAETTRELVERIRWMLQNMDDGELSVSPYDTAWVALVEDIGGSGRPQFPTSLEWISNNQYPDGSWGDRKFLFYDRILNTLACVVALKTWNMHPDKCEKGLKFIKENIHSLENENEEYMPVGFEVAFPSLIETAKKLGIEIPDDSPGMKDIYAKRHLKLKKIPMDLLHKMPTSLLFSLEGMKGLDWQKLLNLRFEGSFLSSPSSTAYALQHTKDELSLQYLLKAIKKFNGGVPNAYPVDMFEHLWSVDRLQRLGISRYFEPEIEECMKYAYRYWTDKGICWARNTNVQDVDDSSMGFRLLRLHSFPVTIDAFKQFEKGGEFCSIPGQSTHAITGMYNIFRASQVLFPGDHILADARKYSAKFLHQKRVNEAIVDKWIITKDLPGEVGYALDVPFYASLPRLEARFFLEHYGGDDDVWIGKTLYRMLYVNCDTYLELAKLDYNVCQAVHQHEWTNIRRWYKDCSVGEFRLAERSLLRAYYIAASTVFEPERSGERLAWAKTAILLETILSQKLHSEEKHTVVDEFKHGSISISGNGRRHQTRISLAETLIYTVNQLSSDIKQAHGRDIHQQLHHAWQKWLTTWEGRGNLGEAEAELLVRTLHLSSGLDESWFSHPKYQQLLEVTSKVCHQLRLFQNRKMHDPKGCTIDLVTGTTFQIEAGMQELVKLVFTKSSEDLDAHTKQSFFAIARSFYYTAYCDPEAIESHVDKVLFDKVV.

Residues 1–75 (MSLAYSQATS…VILTAEKSVD (75 aa)) constitute a chloroplast transit peptide. Residue lysine 244 coordinates substrate. 2 residues coordinate Mg(2+): aspartate 375 and aspartate 377. The short motif at 375 to 378 (DVDD) is the DXDD motif element. Position 461 (lysine 461) interacts with substrate.

Belongs to the terpene synthase family. Mg(2+) is required as a cofactor. Mostly expressed in trichomes of leaves and fruits.

The protein localises to the plastid. Its subcellular location is the chloroplast. The catalysed reaction is (2E,6E,10E)-geranylgeranyl diphosphate = (+)-kolavenyl diphosphate. It participates in secondary metabolite biosynthesis; terpenoid biosynthesis. Its function is as follows. Involved in the biosynthesis of labdane-type diterpenoid including cleroda-dienols, and peregrinol lactones and furan derivatives, dopaminergic diterpenoids that can bind to dopamine receptors in the human pituitary gland, have probably ability to lower prolactin levels, and are used to treat menstrual cycle disorders (e.g. premenstrual syndrome and mastodynia). Terpene synthase that produces kolavenyl diphosphate from geranylgeranyl diphosphate (GGPP). This is Kolavenyl diphosphate synthase TPS5, chloroplastic from Vitex agnus-castus (Chaste tree).